The chain runs to 91 residues: Virion membrane protein A14 homolog (91 aa).

Residues 1–12 (MDPLGFFRNRPS) are Intravirion-facing. The helical transmembrane segment at 13 to 33 (YVVVFGIILLIVACICAYIEL) threads the bilayer. Over 34-46 (SKSGKPADSALRS) the chain is Virion surface. A helical transmembrane segment spans residues 47–67 (ISIISFILAILLLLGIILFSG). Over 68–91 (YNRYCTGNVVDESRYATSPGTEIQ) the chain is Intravirion.

The protein belongs to the chordopoxvirinae A14 family. As to quaternary structure, homodimer; disulfide-linked. Interacts with A17. In terms of processing, phosphorylated by viral F10 kinase, phosphorylation state is regulated by H1 phosphatase.

It localises to the virion membrane. In terms of biological role, envelope protein which is a major component of the mature virion (MV) membrane. Essential for membrane biogenesis. Is required, together with A17, to form bona fide crescents, which can progress to form the immature virion (IV) membrane. A14 and A17 form a lattice that is stabilized by disulfide bonds and serves as an anchor within the viral membrane to which several other proteins important in virion structure and morphogenesis attach. In Fowlpox virus (strain NVSL) (FPV), this protein is Virion membrane protein A14 homolog.